The sequence spans 523 residues: MPGVRSLLLALAGVSLAPAVLAADASTDSSDVHALKTDTFKDFIKEHDLVLAEFYAPWCGHCKALAPEYEKAATELKSKNIQLAKVDCTEEADLCQEYGVEGYPTLKVFRGLDSHKPYNGARKSPAITSYMIKQSLPSVSVVTAENFEEVKSLDKVVVVAFIGEDDKETNKTYTALADSMRDDVLFAGTSSAELAKKEGVSLPAVVLYKEFDDRKDVYDGKFEAEALKAFIKSSSTPLVGEVGPETYSGYMSAGIPLAYIFADTAEEREQYASDFKDLAKKLKGKINFATIDSKAFGAHAANLNLIPEKFPAFAIQDTVSNKKYPFDQEKKLTKQDITKFVEGVIAGDIAPSVKSEAVPETNDGPVTVIVAHTYEEIVMNKDKDVLVEFYAPWCGHCKALAPKYDQLGSLYKDNKDFASKVTIAKVDATANDIPDEIQGFPTIKLFPADDKDKPVEYTGSRTIEDLANFVRDNGKHKVDAYDEKKVEKDGSDVTGKPKDAEAPPKPSDAPESEEKADKEHEEL.

The N-terminal stretch at 1-22 is a signal peptide; it reads MPGVRSLLLALAGVSLAPAVLA. Residues 24–137 enclose the Thioredoxin 1 domain; it reads DASTDSSDVH…TSYMIKQSLP (114 aa). Residues Cys-59 and Cys-62 each act as nucleophile in the active site. A disulfide bond links Cys-59 and Cys-62. N-linked (GlcNAc...) asparagine glycosylation is present at Asn-170. Positions 344 to 475 constitute a Thioredoxin 2 domain; sequence VIAGDIAPSV…LANFVRDNGK (132 aa). Cys-394 and Cys-397 are joined by a disulfide. 2 stretches are compositionally biased toward basic and acidic residues: residues 478–502 and 512–523; these read VDAYDEKKVEKDGSDVTGKPKDAEA and SEEKADKEHEEL. Residues 478 to 523 form a disordered region; the sequence is VDAYDEKKVEKDGSDVTGKPKDAEAPPKPSDAPESEEKADKEHEEL. The Prevents secretion from ER signature appears at 520–523; sequence HEEL.

It belongs to the protein disulfide isomerase family.

It localises to the endoplasmic reticulum lumen. The enzyme catalyses Catalyzes the rearrangement of -S-S- bonds in proteins.. Functionally, participates in the folding of proteins containing disulfide bonds, may be involved in glycosylation, prolyl hydroxylation and triglyceride transfer. This Arthroderma benhamiae (strain ATCC MYA-4681 / CBS 112371) (Trichophyton mentagrophytes) protein is Protein disulfide-isomerase.